Reading from the N-terminus, the 738-residue chain is Ethylene receptor (738 aa).

3 helical membrane passes run 22-42 (ISDF…VYFV), 53-73 (VLVQ…INLW), and 91-111 (VLTA…IPDL). 2 residues coordinate Cu cation: Cys-64 and His-68. A GAF domain is found at 157–305 (DRHTILKTTL…VVADQVAVAL (149 aa)). Residues 348-585 (VMNHEMRTPM…TAIFIVKLGI (238 aa)) enclose the Histidine kinase domain. The residue at position 351 (His-351) is a Phosphohistidine; by autocatalysis. The 118-residue stretch at 613–730 (KVLIMDDNGF…KMRSVLSELL (118 aa)) folds into the Response regulatory domain. Position 661 is a 4-aspartylphosphate (Asp-661).

The protein belongs to the ethylene receptor family. Homodimer; disulfide-linked. Cu cation serves as cofactor. In terms of processing, activation probably requires a transfer of a phosphate group between a His in the transmitter domain and an Asp of the receiver domain.

The protein localises to the endoplasmic reticulum membrane. It carries out the reaction ATP + protein L-histidine = ADP + protein N-phospho-L-histidine.. Functionally, may act early in the ethylene signal transduction pathway, possibly as an ethylene receptor, or as a regulator of the pathway. The polypeptide is Ethylene receptor (ETR1) (Nicotiana tabacum (Common tobacco)).